The primary structure comprises 695 residues: G-patch and R3H domain-containing protein C30B4.02c (695 aa).

6 disordered regions span residues 168-200, 213-242, 257-317, 332-351, 388-448, and 475-517; these read SDKE…NDDS, DIAN…EFDI, FADL…FDEG, GNTD…DEDE, DSED…VAAR, and DKSK…DSDN. Residues 182–198 show a composition bias toward basic and acidic residues; that stretch reads CYKEQESEKELYSKDND. Acidic residues-rich tracts occupy residues 262 to 286, 307 to 317, and 337 to 351; these read VLEE…EEEE, EDSESLEFDEG, and LAED…DEDE. The span at 421–434 shows a compositional bias: basic residues; the sequence is KKDRKLPKKMRKAQ. Positions 525 to 587 constitute an R3H domain; sequence KIFINDVYQR…KRYTMLSKTH (63 aa). Residues 652–695 form the G-patch domain; that stretch reads KENPGRRLLEKLGWYAGKGLGHPENEGSKDSLRAIVKVSRSGLG.

The protein resides in the cytoplasm. The polypeptide is G-patch and R3H domain-containing protein C30B4.02c (Schizosaccharomyces pombe (strain 972 / ATCC 24843) (Fission yeast)).